A 107-amino-acid chain; its full sequence is Large ribosomal subunit protein eL33B (107 aa).

Alanine 2 is modified (N-acetylalanine; partial). Lysine 47 is covalently cross-linked (Glycyl lysine isopeptide (Lys-Gly) (interchain with G-Cter in ubiquitin)).

The protein belongs to the eukaryotic ribosomal protein eL33 family. In terms of assembly, component of the large ribosomal subunit (LSU). Mature yeast ribosomes consist of a small (40S) and a large (60S) subunit. The 40S small subunit contains 1 molecule of ribosomal RNA (18S rRNA) and 33 different proteins (encoded by 57 genes). The large 60S subunit contains 3 rRNA molecules (25S, 5.8S and 5S rRNA) and 46 different proteins (encoded by 81 genes). N-terminally acetylated by acetyltransferase NatA.

It is found in the cytoplasm. Component of the ribosome, a large ribonucleoprotein complex responsible for the synthesis of proteins in the cell. The small ribosomal subunit (SSU) binds messenger RNAs (mRNAs) and translates the encoded message by selecting cognate aminoacyl-transfer RNA (tRNA) molecules. The large subunit (LSU) contains the ribosomal catalytic site termed the peptidyl transferase center (PTC), which catalyzes the formation of peptide bonds, thereby polymerizing the amino acids delivered by tRNAs into a polypeptide chain. The nascent polypeptides leave the ribosome through a tunnel in the LSU and interact with protein factors that function in enzymatic processing, targeting, and the membrane insertion of nascent chains at the exit of the ribosomal tunnel. The chain is Large ribosomal subunit protein eL33B from Saccharomyces cerevisiae (strain ATCC 204508 / S288c) (Baker's yeast).